The chain runs to 703 residues: Peptide transporter CstA (703 aa).

16 helical membrane passes run 6–26 (TKILWLFVAALGAICFGYLAL), 29–49 (GESVSAIYLVVAAVCIYMIGY), 87–107 (VLFGHHFAAIAGAGPLVGPIL), 118–138 (LWILVGGVLAGAVHDFVVLFI), 162–182 (VAMVAIFGIMLIIIAILAMVV), 190–210 (PWGLFTIAMTIPIAIFMGIYM), 221–241 (ASIIGFVLLILAIHYGSVIAA), 256–276 (LAIVMMAYGFIASVLPVWFLL), 282–302 (LSTFLKIGVIVVMAVAIVLVA), 319–339 (GPVFAGGVFPFLFITIACGAI), 374–394 (AVAIMALICACILHPGLYFAI), 463–483 (LMAFWYHFAILFEALFILTAV), 514–534 (GLLATALSVAGWGYFLYQGAI), 547–567 (FGVSNQMLAGMALLLATTILV), 574–594 (YTWVTLVPAVFVLVATLYGGI), and 660–680 (AILCVFFMIATLLVIISCIGI).

Belongs to the peptide transporter carbon starvation (CstA) (TC 2.A.114) family.

It is found in the cell inner membrane. Its function is as follows. Involved in the uptake of dipeptides and tripeptides. May influence host-pathogen interactions. Involved in motility and agglutination, and has a role in stimulation of dendritic cells. The polypeptide is Peptide transporter CstA (Campylobacter jejuni subsp. jejuni serotype O:2 (strain ATCC 700819 / NCTC 11168)).